A 39-amino-acid chain; its full sequence is Potassium channel toxin alpha-KTx 31.1 (39 aa).

3 disulfides stabilise this stretch: Cys7–Cys30, Cys13–Cys35, and Cys17–Cys37.

Belongs to the short scorpion toxin superfamily. Potassium channel inhibitor family. Alpha-KTx 31 subfamily. In terms of tissue distribution, expressed by the venom gland.

It is found in the secreted. In terms of biological role, voltage-gated potassium channel inhibitor. 1 uM of the native toxin inhibits rat Kv1.2/KCNA2 (100% inhibition), and drosophila Shaker IR/Sh (100%), human Kv1.3/KCNA3 (83%), rat Kv1.1/KCNA1 (32%) and rat Kv1.6/KCNA6 (21%). The sequence is that of Potassium channel toxin alpha-KTx 31.1 from Buthus occitanus tunetanus (Common European scorpion).